The sequence spans 484 residues: Aspartyl/glutamyl-tRNA(Asn/Gln) amidotransferase subunit B (484 aa).

The protein belongs to the GatB/GatE family. GatB subfamily. As to quaternary structure, heterotrimer of A, B and C subunits.

The catalysed reaction is L-glutamyl-tRNA(Gln) + L-glutamine + ATP + H2O = L-glutaminyl-tRNA(Gln) + L-glutamate + ADP + phosphate + H(+). The enzyme catalyses L-aspartyl-tRNA(Asn) + L-glutamine + ATP + H2O = L-asparaginyl-tRNA(Asn) + L-glutamate + ADP + phosphate + 2 H(+). In terms of biological role, allows the formation of correctly charged Asn-tRNA(Asn) or Gln-tRNA(Gln) through the transamidation of misacylated Asp-tRNA(Asn) or Glu-tRNA(Gln) in organisms which lack either or both of asparaginyl-tRNA or glutaminyl-tRNA synthetases. The reaction takes place in the presence of glutamine and ATP through an activated phospho-Asp-tRNA(Asn) or phospho-Glu-tRNA(Gln). In Bordetella parapertussis (strain 12822 / ATCC BAA-587 / NCTC 13253), this protein is Aspartyl/glutamyl-tRNA(Asn/Gln) amidotransferase subunit B.